Reading from the N-terminus, the 301-residue chain is Protein FAM221A (301 aa).

The disordered stretch occupies residues 235 to 271 (MHAPSTSSPQPLAGGNEVGPSTQLSSLRKPEEDDMAY).

The protein belongs to the FAM221 family.

This is Protein FAM221A (Fam221a) from Mus musculus (Mouse).